A 400-amino-acid chain; its full sequence is MDSCGLIVEYNPFHNGHQYHINQARNVSNSTCIIAIMSGNFLQRGEPAIIDKFHRTKAALHGGADIVIELPYTFAVQNSDRFANGAIQTLNKFGVSSVCFGSESGSMDPFFQAYKTIKNSSEAFDNLLKDNLSDGLSFPDAATAVYETLGLTEGNLDLSKPNNILGFSYVKAIQEYAPTIKPLTIQRKNNDFHDESINGSIASATSIRKQILQSDSMDDDVHNAIPIETLHQLQSYKDKTAIWHDFEQYFPLLRYRVLTMSIKELQNIQGVVEGLEYRIQQTASDALSFVDWMHKIKTKRYTWTRIQRIFIHILTNTKKDENYVDESPSYIRILGMNKQGQQYLNYHKKNFDVPIITSIANTTHSMLAIEERATKAYYSIIPAKLQRKMFKQELQGPIII.

ATP-binding positions include 7-20 (IVEYNPFHNGHQYH), G101, N162, and R187.

It belongs to the TmcAL family.

Its subcellular location is the cytoplasm. It carries out the reaction cytidine(34) in elongator tRNA(Met) + acetate + ATP = N(4)-acetylcytidine(34) in elongator tRNA(Met) + AMP + diphosphate. In terms of biological role, catalyzes the formation of N(4)-acetylcytidine (ac(4)C) at the wobble position of elongator tRNA(Met), using acetate and ATP as substrates. First activates an acetate ion to form acetyladenylate (Ac-AMP) and then transfers the acetyl group to tRNA to form ac(4)C34. In Oceanobacillus iheyensis (strain DSM 14371 / CIP 107618 / JCM 11309 / KCTC 3954 / HTE831), this protein is tRNA(Met) cytidine acetate ligase.